The sequence spans 214 residues: Ribosomal RNA large subunit methyltransferase E (214 aa).

Residues Gly60, Trp62, Asp86, Asp102, and Asp127 each coordinate S-adenosyl-L-methionine. Lys167 serves as the catalytic Proton acceptor.

This sequence belongs to the class I-like SAM-binding methyltransferase superfamily. RNA methyltransferase RlmE family.

It is found in the cytoplasm. The catalysed reaction is uridine(2552) in 23S rRNA + S-adenosyl-L-methionine = 2'-O-methyluridine(2552) in 23S rRNA + S-adenosyl-L-homocysteine + H(+). Functionally, specifically methylates the uridine in position 2552 of 23S rRNA at the 2'-O position of the ribose in the fully assembled 50S ribosomal subunit. The chain is Ribosomal RNA large subunit methyltransferase E from Herminiimonas arsenicoxydans.